The primary structure comprises 319 residues: Ferrochelatase (319 aa).

His-193 and Glu-274 together coordinate Fe cation.

Belongs to the ferrochelatase family.

It localises to the cytoplasm. The catalysed reaction is heme b + 2 H(+) = protoporphyrin IX + Fe(2+). It functions in the pathway porphyrin-containing compound metabolism; protoheme biosynthesis; protoheme from protoporphyrin-IX: step 1/1. Its function is as follows. Catalyzes the ferrous insertion into protoporphyrin IX. The protein is Ferrochelatase of Actinobacillus pleuropneumoniae serotype 5b (strain L20).